The primary structure comprises 318 residues: Homoserine kinase (318 aa).

Position 97 to 107 (97 to 107) interacts with ATP; the sequence is PIGSGLGSSAC.

The protein belongs to the GHMP kinase family. Homoserine kinase subfamily.

It localises to the cytoplasm. The enzyme catalyses L-homoserine + ATP = O-phospho-L-homoserine + ADP + H(+). The protein operates within amino-acid biosynthesis; L-threonine biosynthesis; L-threonine from L-aspartate: step 4/5. Functionally, catalyzes the ATP-dependent phosphorylation of L-homoserine to L-homoserine phosphate. The chain is Homoserine kinase from Photobacterium profundum (strain SS9).